We begin with the raw amino-acid sequence, 498 residues long: Zinc finger protein 497 (498 aa).

A disordered region spans residues 30–104 (SEGAVSGGWG…LRPSPLPEEP (75 aa)). 14 C2H2-type zinc fingers span residues 106 to 128 (CRCG…RRVH), 134 to 156 (YTCP…QRIH), 162 to 184 (YACR…QETH), 190 to 212 (FRCP…RRTH), 218 to 240 (YECP…RRVH), 246 to 268 (HACR…LKIH), 274 to 296 (HACP…RRTH), 302 to 324 (FPCA…QRTH), 330 to 352 (FECA…RRVH), 358 to 380 (HACA…RRTH), 386 to 408 (FACA…RLSH), 414 to 436 (FACA…QRLH), 442 to 464 (FVCA…RRTH), and 470 to 492 (YACG…QKRH).

It belongs to the krueppel C2H2-type zinc-finger protein family.

It is found in the nucleus. Functionally, may be involved in transcriptional regulation. The polypeptide is Zinc finger protein 497 (ZNF497) (Homo sapiens (Human)).